The following is a 73-amino-acid chain: MPMPKIADARALSDEELSNEIYAVKKELFELRLQQATRQLNQPHLIRLRKHKLAQLLTVEGERKRGKRPTKEE.

This sequence belongs to the universal ribosomal protein uL29 family.

This is Large ribosomal subunit protein uL29 from Synechococcus sp. (strain JA-2-3B'a(2-13)) (Cyanobacteria bacterium Yellowstone B-Prime).